Consider the following 57-residue polypeptide: DNA gyrase inhibitor YacG (57 aa).

Cys5, Cys8, Cys20, and Cys24 together coordinate Zn(2+).

It belongs to the DNA gyrase inhibitor YacG family. Interacts with GyrB. It depends on Zn(2+) as a cofactor.

In terms of biological role, inhibits all the catalytic activities of DNA gyrase by preventing its interaction with DNA. Acts by binding directly to the C-terminal domain of GyrB, which probably disrupts DNA binding by the gyrase. This Caulobacter vibrioides (strain ATCC 19089 / CIP 103742 / CB 15) (Caulobacter crescentus) protein is DNA gyrase inhibitor YacG.